A 397-amino-acid polypeptide reads, in one-letter code: Subtilisin-like serine protease Pen ch 13.0101 (397 aa).

The signal sequence occupies residues 1–19; sequence MGFLKVLATSLATLAVVDA. Positions 20 to 115 are cleaved as a propeptide — removed in mature form; that stretch reads GTLLTASNTD…IEPDMIVNAT (96 aa). In terms of domain architecture, Inhibitor I9 spans 35 to 113; sequence SYIVVMNDDV…KYIEPDMIVN (79 aa). Asn113 is a glycosylation site (N-linked (GlcNAc...) asparagine). The Peptidase S8 domain occupies 125-397; sequence SWGLARISSK…SKLLYNGINV (273 aa). Residues Asp157 and His188 each act as charge relay system in the active site. 2 N-linked (GlcNAc...) asparagine glycosylation sites follow: Asn249 and Asn284. Ser343 (charge relay system) is an active-site residue.

This sequence belongs to the peptidase S8 family.

Its subcellular location is the secreted. Serine protease. This Penicillium rubens protein is Subtilisin-like serine protease Pen ch 13.0101.